Here is a 95-residue protein sequence, read N- to C-terminus: Large ribosomal subunit protein bL27 (95 aa).

Residues 1–25 (MAHKKGTGSTRNGRDSNAQRLGVKR) are disordered. Over residues 7–19 (TGSTRNGRDSNAQ) the composition is skewed to polar residues.

This sequence belongs to the bacterial ribosomal protein bL27 family.

In Gloeobacter violaceus (strain ATCC 29082 / PCC 7421), this protein is Large ribosomal subunit protein bL27.